The following is a 66-amino-acid chain: Large ribosomal subunit protein bL33c (66 aa).

The protein belongs to the bacterial ribosomal protein bL33 family.

It is found in the plastid. Its subcellular location is the chloroplast. The protein is Large ribosomal subunit protein bL33c of Oenothera argillicola (Appalachian evening primrose).